We begin with the raw amino-acid sequence, 240 residues long: CRISPR-associated protein Cas5 3 (240 aa).

It belongs to the CRISPR-associated protein Cas5 family. Subtype I-A/Apern subfamily. In terms of assembly, part of the aCascade ribonucleoprotein complex.

In terms of biological role, CRISPR (clustered regularly interspaced short palindromic repeat) is an adaptive immune system that provides protection against mobile genetic elements (viruses, transposable elements and conjugative plasmids). CRISPR clusters contain spacers, sequences complementary to antecedent mobile elements, and target invading nucleic acids. CRISPR clusters are transcribed and processed into CRISPR RNA (crRNA). The sequence is that of CRISPR-associated protein Cas5 3 (cas5c) from Saccharolobus solfataricus (strain ATCC 35092 / DSM 1617 / JCM 11322 / P2) (Sulfolobus solfataricus).